The chain runs to 264 residues: Meiotic recombination protein REC102 (264 aa).

Belongs to the TOP6B-like family. As to quaternary structure, interacts with REC104; seems to form a functional unit with REC104. REC102-REC104 interacts with SKI8-SPO11 and this interaction is required for proper subcellular location of the proteins during the initiation of recombination. Interacts with MEI4, REC114 and SPO11.

It is found in the nucleus. In terms of biological role, required for formation of the SPO11-mediated double-strand breaks (DSBs) that initiate meiotic recombination. May mediate the interaction between SPO11 subunits during meiosis. Also needed for homolog chromosome pairing, synaptonemal complex formation, and for the proper timing of the first meiotic division. Not required for mitosis and mitotic DNA repair mechanisms. In Saccharomyces cerevisiae (strain ATCC 204508 / S288c) (Baker's yeast), this protein is Meiotic recombination protein REC102.